Reading from the N-terminus, the 206-residue chain is Large ribosomal subunit protein uL4 (206 aa).

It belongs to the universal ribosomal protein uL4 family. In terms of assembly, part of the 50S ribosomal subunit.

One of the primary rRNA binding proteins, this protein initially binds near the 5'-end of the 23S rRNA. It is important during the early stages of 50S assembly. It makes multiple contacts with different domains of the 23S rRNA in the assembled 50S subunit and ribosome. Functionally, forms part of the polypeptide exit tunnel. This Nitratidesulfovibrio vulgaris (strain ATCC 29579 / DSM 644 / CCUG 34227 / NCIMB 8303 / VKM B-1760 / Hildenborough) (Desulfovibrio vulgaris) protein is Large ribosomal subunit protein uL4.